We begin with the raw amino-acid sequence, 2462 residues long: Non-reducing polyketide synthase ausA (2462 aa).

The N-terminal acylcarrier protein transacylase domain (SAT) stretch occupies residues 16–253 (VFFGPVYPEL…HTADHIPAMK (238 aa)). A Ketosynthase family 3 (KS3) domain is found at 385–801 (SAPIAVTGFA…GSNAVIVVKE (417 aa)). Catalysis depends on for beta-ketoacyl synthase activity residues cysteine 550, histidine 685, and histidine 724. The interval 904–1208 (LCFGGQTGDT…LPIDLQESTA (305 aa)) is malonyl-CoA:ACP transacylase (MAT) domain. The active-site For acyl/malonyl transferase activity is serine 991. The N-terminal hotdog fold stretch occupies residues 1274-1403 (HDDGLLQLVE…GKVLLDPQAA (130 aa)). Residues 1274 to 1581 (HDDGLLQLVE…FTSVSIQSLK (308 aa)) enclose the PKS/mFAS DH domain. A product template (PT) domain region spans residues 1277-1580 (GLLQLVERDA…TFTSVSIQSL (304 aa)). Histidine 1307 serves as the catalytic Proton acceptor; for dehydratase activity. The interval 1431 to 1581 (SSNGLKRATV…FTSVSIQSLK (151 aa)) is C-terminal hotdog fold. Aspartate 1489 functions as the Proton donor; for dehydratase activity in the catalytic mechanism. The 78-residue stretch at 1613-1690 (VSDDHHLRAV…GLAHRISPSS (78 aa)) folds into the Carrier domain. The residue at position 1650 (serine 1650) is an O-(pantetheine 4'-phosphoryl)serine. The interval 1850-2083 (QHASEHKLLR…GFNWVDWTDN (234 aa)) is methyltransferase (CMeT) domain. The tract at residues 2112 to 2462 (TPARVETVRY…YEFLRQHVAV (351 aa)) is thioesterase (TE) domain. Catalysis depends on for thioesterase activity residues serine 2235, aspartate 2398, and histidine 2430.

It catalyses the reaction 3 malonyl-CoA + acetyl-CoA + 2 S-adenosyl-L-methionine = 3,5-dimethylorsellinate + 2 S-adenosyl-L-homocysteine + 3 CO2 + 4 CoA. It participates in secondary metabolite biosynthesis; terpenoid biosynthesis. Its function is as follows. Non-reducing polyketide synthase; part of the gene cluster that mediates the biosynthesis of calidodehydroaustin, a fungal meroterpenoid. The first step of the pathway is the synthesis of 3,5-dimethylorsellinic acid by the polyketide synthase ausA. 3,5-dimethylorsellinic acid is then prenylated by the polyprenyl transferase ausN. Further epoxidation by the FAD-dependent monooxygenase ausM and cyclization by the probable terpene cyclase ausL lead to the formation of protoaustinoid A. Protoaustinoid A is then oxidized to spiro-lactone preaustinoid A3 by the combined action of the FAD-binding monooxygenases ausB and ausC, and the dioxygenase ausE. Acid-catalyzed keto-rearrangement and ring contraction of the tetraketide portion of preaustinoid A3 by ausJ lead to the formation of preaustinoid A4. The aldo-keto reductase ausK, with the help of ausH, is involved in the next step by transforming preaustinoid A4 into isoaustinone which is in turn hydroxylated by the P450 monooxygenase ausI to form austinolide. The cytochrome P450 monooxygenase ausG modifies austinolide to austinol. Austinol is further acetylated to austin by the O-acetyltransferase ausP, which spontaneously changes to dehydroaustin. The cytochrome P450 monooxygenase ausR then converts dehydroaustin is into 7-dehydrodehydroaustin. The hydroxylation catalyzed by ausR permits the O-acetyltransferase ausQ to add an additional acetyl group to the molecule, leading to the formation of acetoxydehydroaustin. The short chain dehydrogenase ausT catalyzes the reduction of the double bond present between carbon atoms 1 and 2 to convert 7-dehydrodehydroaustin into 1,2-dihydro-7-hydroxydehydroaustin. AusQ catalyzes not only an acetylation reaction but also the addition of the PKS ausV diketide product to 1,2-dihydro-7-hydroxydehydroaustin, forming precalidodehydroaustin. Finally, the iron/alpha-ketoglutarate-dependent dioxygenase converts precalidodehydroaustin into calidodehydroaustin. This chain is Non-reducing polyketide synthase ausA, found in Aspergillus calidoustus.